The following is a 204-amino-acid chain: High frequency lysogenization protein HflD homolog (204 aa).

Belongs to the HflD family.

The protein localises to the cytoplasm. It localises to the cell inner membrane. This chain is High frequency lysogenization protein HflD homolog, found in Shewanella amazonensis (strain ATCC BAA-1098 / SB2B).